Consider the following 432-residue polypeptide: MAKNVVVVGTQWGDEGKGKIVDWLTDHSQGVVRFQGGHNAGHTLVIGGHKTALQLIPSGIMREGVACYIGNGVVLSVPDVLREIDKLHAIGVEVPSRLKISEACPIILPYHTALDVAREVARGDAKIGTTGKGIGPAYEDKVARRAIRAADLLNEKRFAEKLRENLDYHNFVLANYLKVATVDYQKTLDDALADVPRLKPMVGDVSSALYAAFNAGANLLFEGAQGSLLDVDHGTYPYVTSSNCVAGNASTGSGVGPGMLHYILGITKAYTTRVGSGPFPSELPTDQGVGKHLATVGHEFGTVTGRARRCGWFDAALLKRSVQINGVTGMCFTKLDVLDGLETLRICTGYKLNGKIVDIFPVGAEDAAACEPIYEEMPGWKEATVGAKTLEALPANARAYIDRIEKLVGVPIDMISTGPDREETIVLRHPFK.

Residues 13 to 19 (GDEGKGK) and 41 to 43 (GHT) each bind GTP. Aspartate 14 acts as the Proton acceptor in catalysis. Mg(2+) contacts are provided by aspartate 14 and glycine 41. IMP is bound by residues 14-17 (DEGK), 39-42 (NAGH), threonine 130, arginine 144, glutamine 225, threonine 240, and arginine 306. Histidine 42 serves as the catalytic Proton donor. 302–308 (TVTGRAR) serves as a coordination point for substrate. Residues arginine 308, 334–336 (KLD), and 416–418 (STG) each bind GTP.

It belongs to the adenylosuccinate synthetase family. As to quaternary structure, homodimer. Requires Mg(2+) as cofactor.

The protein localises to the cytoplasm. The enzyme catalyses IMP + L-aspartate + GTP = N(6)-(1,2-dicarboxyethyl)-AMP + GDP + phosphate + 2 H(+). It functions in the pathway purine metabolism; AMP biosynthesis via de novo pathway; AMP from IMP: step 1/2. In terms of biological role, plays an important role in the de novo pathway of purine nucleotide biosynthesis. Catalyzes the first committed step in the biosynthesis of AMP from IMP. The sequence is that of Adenylosuccinate synthetase from Herminiimonas arsenicoxydans.